The following is an 860-amino-acid chain: Leucine--tRNA ligase (860 aa).

The 'HIGH' region motif lies at 42-52; sequence PYPSGRLHMGH. The 'KMSKS' region signature appears at 619-623; it reads KMSKS. ATP is bound at residue lysine 622.

The protein belongs to the class-I aminoacyl-tRNA synthetase family.

The protein resides in the cytoplasm. It carries out the reaction tRNA(Leu) + L-leucine + ATP = L-leucyl-tRNA(Leu) + AMP + diphosphate. In Escherichia coli (strain 55989 / EAEC), this protein is Leucine--tRNA ligase.